The following is a 327-amino-acid chain: Acetyl-coenzyme A carboxylase carboxyl transferase subunit beta (327 aa).

The 270-residue stretch at 24–293 folds into the CoA carboxyltransferase N-terminal domain; it reads LWIKCPDTGQ…LTVTTAVEAP (270 aa). Over residues 293-311 the composition is skewed to low complexity; sequence PAEAAAKAEPEATTTEQPV. Positions 293–327 are disordered; the sequence is PAEAAAKAEPEATTTEQPVAPAPTEPPAQPAAPQA. Positions 312 to 327 are enriched in pro residues; the sequence is APAPTEPPAQPAAPQA.

This sequence belongs to the AccD/PCCB family. Acetyl-CoA carboxylase is a heterohexamer composed of biotin carboxyl carrier protein (AccB), biotin carboxylase (AccC) and two subunits each of ACCase subunit alpha (AccA) and ACCase subunit beta (AccD).

It localises to the cytoplasm. The catalysed reaction is N(6)-carboxybiotinyl-L-lysyl-[protein] + acetyl-CoA = N(6)-biotinyl-L-lysyl-[protein] + malonyl-CoA. It functions in the pathway lipid metabolism; malonyl-CoA biosynthesis; malonyl-CoA from acetyl-CoA: step 1/1. In terms of biological role, component of the acetyl coenzyme A carboxylase (ACC) complex. Biotin carboxylase (BC) catalyzes the carboxylation of biotin on its carrier protein (BCCP) and then the CO(2) group is transferred by the transcarboxylase to acetyl-CoA to form malonyl-CoA. This is Acetyl-coenzyme A carboxylase carboxyl transferase subunit beta from Rhodopseudomonas palustris (strain TIE-1).